We begin with the raw amino-acid sequence, 557 residues long: Arginine--tRNA ligase (557 aa).

Positions 132–142 (ANPTGDLHLGH) match the 'HIGH' region motif.

The protein belongs to the class-I aminoacyl-tRNA synthetase family. Monomer.

It localises to the cytoplasm. It carries out the reaction tRNA(Arg) + L-arginine + ATP = L-arginyl-tRNA(Arg) + AMP + diphosphate. The protein is Arginine--tRNA ligase of Bacillus pumilus (strain SAFR-032).